We begin with the raw amino-acid sequence, 360 residues long: Protein RecA (360 aa).

Gly-66–Thr-73 provides a ligand contact to ATP. The disordered stretch occupies residues Asp-330–Lys-360.

It belongs to the RecA family.

The protein localises to the cytoplasm. Functionally, can catalyze the hydrolysis of ATP in the presence of single-stranded DNA, the ATP-dependent uptake of single-stranded DNA by duplex DNA, and the ATP-dependent hybridization of homologous single-stranded DNAs. It interacts with LexA causing its activation and leading to its autocatalytic cleavage. The protein is Protein RecA of Lactobacillus johnsonii (strain CNCM I-12250 / La1 / NCC 533).